Reading from the N-terminus, the 99-residue chain is uncharacterized protein (99 aa).

The 48-residue stretch at 32-79 (KKSVGIAVLLSFIIPGAGQMYLGRVGKGIILLLTCWLIIPWIYSIYDA) folds into the TM2 domain. 2 consecutive transmembrane segments (helical) span residues 34 to 54 (SVGI…MYLG) and 56 to 76 (VGKG…IYSI).

It localises to the cell membrane. This is an uncharacterized protein from Methanocaldococcus jannaschii (strain ATCC 43067 / DSM 2661 / JAL-1 / JCM 10045 / NBRC 100440) (Methanococcus jannaschii).